Reading from the N-terminus, the 181-residue chain is ADP-ribosylation factor 1 (181 aa).

Gly2 carries N-myristoyl glycine lipidation. Residues 3–16 (LYVSRLFNRLFQKK) are important for the stable binding to the membranes. GTP is bound by residues 27–32 (AAGKTT), 126–129 (NKQD), and Ala160.

The protein belongs to the small GTPase superfamily. Arf family. As to quaternary structure, may interact with GTPase RAB5b.

The protein localises to the golgi apparatus membrane. It catalyses the reaction GTP + H2O = GDP + phosphate + H(+). With respect to regulation, alternates between an inactive GDP-bound form and an active GTP-bound form. Intrinsic GTPase activity is almost undetectable in vitro. Activated by a guanine nucleotide-exchange factor (GEF) and inactivated by GTPase-activating protein ARFGAP1. Its function is as follows. Small GTPase involved in protein trafficking between different compartments. Modulates vesicle budding and uncoating within the Golgi complex. In its GTP-bound form, triggers the recruitment of coatomer proteins to the Golgi membrane. The hydrolysis of ARF1-bound GTP, which is mediated by ARFGAPs proteins, is required for dissociation of coat proteins from Golgi membranes and vesicles. Regulates the transport of N-acylated AK2 to the parasitophorous vacuole membrane. May be involved in the activation of lipid kinase PIP5K. The sequence is that of ADP-ribosylation factor 1 from Plasmodium falciparum (isolate 3D7).